The primary structure comprises 377 residues: Pseudouridylate synthase RPUSD4, mitochondrial (377 aa).

A mitochondrion-targeting transit peptide spans 1–35 (MAAPLLGSPGLQVLSMSSRTGKLFTPSSRSFCSRA). D153 is a catalytic residue.

Belongs to the pseudouridine synthase RluA family. Interacts with 16S mt-rRNA, mt-tRNA(Phe) and mt-tRNA(Met). Forms a regulatory protein-RNA complex, consisting of RCC1L, NGRN, RPUSD3, RPUSD4, TRUB2, FASTKD2 and 16S mt-rRNA.

The protein localises to the mitochondrion matrix. It is found in the nucleus. The protein resides in the cytoplasm. It catalyses the reaction uridine in 5S rRNA = pseudouridine in 5S rRNA. It carries out the reaction a uridine in tRNA = a pseudouridine in tRNA. The catalysed reaction is a uridine in mRNA = a pseudouridine in mRNA. Catalyzes uridine to pseudouridine isomerization (pseudouridylation) of different mitochondrial RNA substrates. Acts on position 1397 in 16S mitochondrial ribosomal RNA (16S mt-rRNA). This modification is required for the assembly of 16S mt-rRNA into a functional mitochondrial ribosome. As a component of a functional protein-RNA module, consisting of RCC1L, NGRN, RPUSD3, RPUSD4, TRUB2, FASTKD2 and 16S mt-rRNA, controls 16S mt-rRNA abundance and is required for intra-mitochondrial translation. Acts on position 39 in mitochondrial tRNA(Phe). Also catalyzes pseudouridylation of mRNAs in nucleus: acts as a regulator of pre-mRNA splicing by mediating pseudouridylation of pre-mRNAs at locations associated with alternatively spliced regions. Pseudouridylation of pre-mRNAs near splice sites directly regulates mRNA splicing and mRNA 3'-end processing. The polypeptide is Pseudouridylate synthase RPUSD4, mitochondrial (Rattus norvegicus (Rat)).